The following is a 255-amino-acid chain: Lipoprotein-releasing system ATP-binding protein LolD 2 (255 aa).

The 246-residue stretch at 9–254 (LEARGIRKSY…SDSAKLETVA (246 aa)) folds into the ABC transporter domain. Residue 45–52 (GRSGSGKS) coordinates ATP.

Belongs to the ABC transporter superfamily. Lipoprotein translocase (TC 3.A.1.125) family. The complex is composed of two ATP-binding proteins (LolD) and two transmembrane proteins (LolC and LolE).

Its subcellular location is the cell inner membrane. Functionally, part of the ABC transporter complex LolCDE involved in the translocation of mature outer membrane-directed lipoproteins, from the inner membrane to the periplasmic chaperone, LolA. Responsible for the formation of the LolA-lipoprotein complex in an ATP-dependent manner. This Rhodopirellula baltica (strain DSM 10527 / NCIMB 13988 / SH1) protein is Lipoprotein-releasing system ATP-binding protein LolD 2.